Reading from the N-terminus, the 227-residue chain is Cytochrome c oxidase subunit 2 (227 aa).

Over 1–14 (MAHAAQVGLQDATS) the chain is Mitochondrial intermembrane. Residues 15–45 (PIMEELIIFHDHALMIIFLICFLVLYALFLT) form a helical membrane-spanning segment. Residues 46–59 (LTTKLTNTSISDAQ) lie on the Mitochondrial matrix side of the membrane. A helical membrane pass occupies residues 60–87 (EMETVWTILPAIILVLIALPSLRILYMT). Over 88 to 227 (DEVNDPSFTI…IFEMGPVFTL (140 aa)) the chain is Mitochondrial intermembrane. The Cu cation site is built by H161, C196, E198, C200, H204, and M207. E198 is a binding site for Mg(2+).

The protein belongs to the cytochrome c oxidase subunit 2 family. As to quaternary structure, component of the cytochrome c oxidase (complex IV, CIV), a multisubunit enzyme composed of 14 subunits. The complex is composed of a catalytic core of 3 subunits MT-CO1, MT-CO2 and MT-CO3, encoded in the mitochondrial DNA, and 11 supernumerary subunits COX4I, COX5A, COX5B, COX6A, COX6B, COX6C, COX7A, COX7B, COX7C, COX8 and NDUFA4, which are encoded in the nuclear genome. The complex exists as a monomer or a dimer and forms supercomplexes (SCs) in the inner mitochondrial membrane with NADH-ubiquinone oxidoreductase (complex I, CI) and ubiquinol-cytochrome c oxidoreductase (cytochrome b-c1 complex, complex III, CIII), resulting in different assemblies (supercomplex SCI(1)III(2)IV(1) and megacomplex MCI(2)III(2)IV(2)). Found in a complex with TMEM177, COA6, COX18, COX20, SCO1 and SCO2. Interacts with TMEM177 in a COX20-dependent manner. Interacts with COX20. Interacts with COX16. Cu cation serves as cofactor.

It localises to the mitochondrion inner membrane. The enzyme catalyses 4 Fe(II)-[cytochrome c] + O2 + 8 H(+)(in) = 4 Fe(III)-[cytochrome c] + 2 H2O + 4 H(+)(out). Functionally, component of the cytochrome c oxidase, the last enzyme in the mitochondrial electron transport chain which drives oxidative phosphorylation. The respiratory chain contains 3 multisubunit complexes succinate dehydrogenase (complex II, CII), ubiquinol-cytochrome c oxidoreductase (cytochrome b-c1 complex, complex III, CIII) and cytochrome c oxidase (complex IV, CIV), that cooperate to transfer electrons derived from NADH and succinate to molecular oxygen, creating an electrochemical gradient over the inner membrane that drives transmembrane transport and the ATP synthase. Cytochrome c oxidase is the component of the respiratory chain that catalyzes the reduction of oxygen to water. Electrons originating from reduced cytochrome c in the intermembrane space (IMS) are transferred via the dinuclear copper A center (CU(A)) of subunit 2 and heme A of subunit 1 to the active site in subunit 1, a binuclear center (BNC) formed by heme A3 and copper B (CU(B)). The BNC reduces molecular oxygen to 2 water molecules using 4 electrons from cytochrome c in the IMS and 4 protons from the mitochondrial matrix. In Pan paniscus (Pygmy chimpanzee), this protein is Cytochrome c oxidase subunit 2 (MT-CO2).